The following is a 245-amino-acid chain: 1-(5-phosphoribosyl)-5-[(5-phosphoribosylamino)methylideneamino] imidazole-4-carboxamide isomerase (245 aa).

Residue D7 is the Proton acceptor of the active site. Residue D129 is the Proton donor of the active site.

Belongs to the HisA/HisF family.

Its subcellular location is the cytoplasm. The catalysed reaction is 1-(5-phospho-beta-D-ribosyl)-5-[(5-phospho-beta-D-ribosylamino)methylideneamino]imidazole-4-carboxamide = 5-[(5-phospho-1-deoxy-D-ribulos-1-ylimino)methylamino]-1-(5-phospho-beta-D-ribosyl)imidazole-4-carboxamide. It functions in the pathway amino-acid biosynthesis; L-histidine biosynthesis; L-histidine from 5-phospho-alpha-D-ribose 1-diphosphate: step 4/9. The chain is 1-(5-phosphoribosyl)-5-[(5-phosphoribosylamino)methylideneamino] imidazole-4-carboxamide isomerase from Salmonella dublin (strain CT_02021853).